The following is a 101-amino-acid chain: UPF0235 protein Maeo_0841 (101 aa).

It belongs to the UPF0235 family.

This chain is UPF0235 protein Maeo_0841, found in Methanococcus aeolicus (strain ATCC BAA-1280 / DSM 17508 / OCM 812 / Nankai-3).